The following is a 339-amino-acid chain: Heat-inducible transcription repressor HrcA (339 aa).

This sequence belongs to the HrcA family.

Negative regulator of class I heat shock genes (grpE-dnaK-dnaJ and groELS operons). Prevents heat-shock induction of these operons. The protein is Heat-inducible transcription repressor HrcA of Thermotoga neapolitana (strain ATCC 49049 / DSM 4359 / NBRC 107923 / NS-E).